The chain runs to 945 residues: Valine--tRNA ligase (945 aa).

The 'HIGH' region motif lies at 42–52 (PNVTGTLHMGH). Positions 552–556 (KMSKS) match the 'KMSKS' region motif. Lys-555 serves as a coordination point for ATP. A coiled-coil region spans residues 879-945 (DKATETARLS…VQTQLSKLKD (67 aa)).

It belongs to the class-I aminoacyl-tRNA synthetase family. ValS type 1 subfamily. As to quaternary structure, monomer.

It localises to the cytoplasm. The catalysed reaction is tRNA(Val) + L-valine + ATP = L-valyl-tRNA(Val) + AMP + diphosphate. Functionally, catalyzes the attachment of valine to tRNA(Val). As ValRS can inadvertently accommodate and process structurally similar amino acids such as threonine, to avoid such errors, it has a 'posttransfer' editing activity that hydrolyzes mischarged Thr-tRNA(Val) in a tRNA-dependent manner. This Neisseria meningitidis serogroup A / serotype 4A (strain DSM 15465 / Z2491) protein is Valine--tRNA ligase.